A 330-amino-acid polypeptide reads, in one-letter code: Complement factor H-related protein 1 (330 aa).

A signal peptide spans 1–18 (MWLLVSVILISRISSVGG). Sushi domains follow at residues 22-84 (FCDF…PKCL), 85-142 (RLCF…KCRS), 145-203 (TSCV…QCKD), 206-264 (GKCG…KCLH), and 273-329 (MENY…TCAK). 10 disulfides stabilise this stretch: C23-C72, C55-C83, C87-C129, C114-C140, C147-C190, C176-C201, C208-C251, C237-C262, C266-C317, and C300-C327. An N-linked (GlcNAc...) asparagine glycan is attached at N126. N194 is a glycosylation site (N-linked (GlcNAc...) asparagine).

Head-to-tail homodimer and heterodimer with CFHR2 or CFHR5. As to quaternary structure, (Microbial infection) Interacts with C.albicans GPD2; the interaction is direct and leads to the degradation of C3. In terms of processing, N-glycosylated. Two forms are observed; one with a single side chain and the other with two. Expressed by the liver and secreted in plasma.

It is found in the secreted. Involved in complement regulation. The dimerized forms have avidity for tissue-bound complement fragments and efficiently compete with the physiological complement inhibitor CFH. Can associate with lipoproteins and may play a role in lipid metabolism. This chain is Complement factor H-related protein 1 (CFHR1), found in Homo sapiens (Human).